We begin with the raw amino-acid sequence, 275 residues long: MALVKVKPTSAGRRGMVKVVSPNLHKGAPHAALLEKKIRGSGRNNNGHITIRHRGGGHKQHYRVVDFRRNKDGIPAKVERLEYDPNRTAHIALLCYADGERRYIIAPRGLEVGATLISGIEAPIRAGNTLPIRNIPVGTTIHCIEMIPGKGAQMARSAGASAVLMAREGTYAQVRLRSGEVRRVHIECRATIGEVGNEEHSLRQIGKAGAMRWRGIRPTVRGVAMNPIDHPHGGGEGRTGEAREPVSPWGTPSKGYKTRRNKRTNNMIVQRRKRK.

The interval 223 to 275 (VAMNPIDHPHGGGEGRTGEAREPVSPWGTPSKGYKTRRNKRTNNMIVQRRKRK) is disordered. The segment covering 229 to 244 (DHPHGGGEGRTGEARE) has biased composition (basic and acidic residues).

Belongs to the universal ribosomal protein uL2 family. Part of the 50S ribosomal subunit. Forms a bridge to the 30S subunit in the 70S ribosome.

In terms of biological role, one of the primary rRNA binding proteins. Required for association of the 30S and 50S subunits to form the 70S ribosome, for tRNA binding and peptide bond formation. It has been suggested to have peptidyltransferase activity; this is somewhat controversial. Makes several contacts with the 16S rRNA in the 70S ribosome. The sequence is that of Large ribosomal subunit protein uL2 from Bordetella avium (strain 197N).